We begin with the raw amino-acid sequence, 590 residues long: Aspartate--tRNA(Asp/Asn) ligase (590 aa).

Glu175 contacts L-aspartate. Residues 199–202 (QQYK) form an aspartate region. Residues Arg221 and His450 each coordinate L-aspartate. 221–223 (RDE) provides a ligand contact to ATP. Glu484 is an ATP binding site. Residue Arg491 participates in L-aspartate binding. 536-539 (GVDR) lines the ATP pocket.

The protein belongs to the class-II aminoacyl-tRNA synthetase family. Type 1 subfamily. Homodimer.

The protein resides in the cytoplasm. It catalyses the reaction tRNA(Asx) + L-aspartate + ATP = L-aspartyl-tRNA(Asx) + AMP + diphosphate. Its function is as follows. Aspartyl-tRNA synthetase with relaxed tRNA specificity since it is able to aspartylate not only its cognate tRNA(Asp) but also tRNA(Asn). Reaction proceeds in two steps: L-aspartate is first activated by ATP to form Asp-AMP and then transferred to the acceptor end of tRNA(Asp/Asn). In Nitrobacter hamburgensis (strain DSM 10229 / NCIMB 13809 / X14), this protein is Aspartate--tRNA(Asp/Asn) ligase.